A 415-amino-acid chain; its full sequence is Ubp4-interactor sfp47 (415 aa).

Phosphoserine occurs at positions 221 and 226. Thr231 carries the post-translational modification Phosphothreonine. Ser235 is modified (phosphoserine). The SH3 domain occupies 352–415 (PIFAYVRALY…PSNYIEELEY (64 aa)).

In terms of assembly, interacts with ubp4.

Its subcellular location is the cytoplasm. It is found in the endosome. Required for the regulation of activity and recruitment of ubp4 to endosomes. The polypeptide is Ubp4-interactor sfp47 (sfp47) (Schizosaccharomyces pombe (strain 972 / ATCC 24843) (Fission yeast)).